The following is a 188-amino-acid chain: Inner membrane-spanning protein YciB (188 aa).

5 consecutive transmembrane segments (helical) span residues 23–43, 49–69, 73–93, 116–133, and 149–169; these read FQKATWVLVAASAAALAIGYA, AMLPLFFGGMALVFGTLGLIF, VFVKIKVTVINLALASFLVGG, WRTLTLRYGAYFAFVAII, and FRLALLPVALVFVATQLPFMM.

This sequence belongs to the YciB family.

It localises to the cell inner membrane. Plays a role in cell envelope biogenesis, maintenance of cell envelope integrity and membrane homeostasis. This chain is Inner membrane-spanning protein YciB, found in Caulobacter vibrioides (strain ATCC 19089 / CIP 103742 / CB 15) (Caulobacter crescentus).